An 848-amino-acid polypeptide reads, in one-letter code: Leucine--tRNA ligase (848 aa).

The interval 1-21 is disordered; sequence MTENTPGTSAPERFDPATADT. The short motif at 51-61 is the 'HIGH' region element; that stretch reads PYPSGRIHIGH. Positions 625–629 match the 'KMSKS' region motif; it reads KMSKS. K628 provides a ligand contact to ATP.

Belongs to the class-I aminoacyl-tRNA synthetase family.

The protein localises to the cytoplasm. The enzyme catalyses tRNA(Leu) + L-leucine + ATP = L-leucyl-tRNA(Leu) + AMP + diphosphate. This is Leucine--tRNA ligase from Novosphingobium aromaticivorans (strain ATCC 700278 / DSM 12444 / CCUG 56034 / CIP 105152 / NBRC 16084 / F199).